Consider the following 370-residue polypeptide: tRNA 2-selenouridine synthase (370 aa).

The Rhodanese domain maps to 12–136 (FLDDVPMMDM…MRTFLLETTQ (125 aa)). Cys95 acts as the S-selanylcysteine intermediate in catalysis.

This sequence belongs to the SelU family. Monomer.

The catalysed reaction is 5-methylaminomethyl-2-thiouridine(34) in tRNA + selenophosphate + (2E)-geranyl diphosphate + H2O + H(+) = 5-methylaminomethyl-2-selenouridine(34) in tRNA + (2E)-thiogeraniol + phosphate + diphosphate. The enzyme catalyses 5-methylaminomethyl-2-thiouridine(34) in tRNA + (2E)-geranyl diphosphate = 5-methylaminomethyl-S-(2E)-geranyl-thiouridine(34) in tRNA + diphosphate. It carries out the reaction 5-methylaminomethyl-S-(2E)-geranyl-thiouridine(34) in tRNA + selenophosphate + H(+) = 5-methylaminomethyl-2-(Se-phospho)selenouridine(34) in tRNA + (2E)-thiogeraniol. It catalyses the reaction 5-methylaminomethyl-2-(Se-phospho)selenouridine(34) in tRNA + H2O = 5-methylaminomethyl-2-selenouridine(34) in tRNA + phosphate. Functionally, involved in the post-transcriptional modification of the uridine at the wobble position (U34) of tRNA(Lys), tRNA(Glu) and tRNA(Gln). Catalyzes the conversion of 2-thiouridine (S2U-RNA) to 2-selenouridine (Se2U-RNA). Acts in a two-step process involving geranylation of 2-thiouridine (S2U) to S-geranyl-2-thiouridine (geS2U) and subsequent selenation of the latter derivative to 2-selenouridine (Se2U) in the tRNA chain. This chain is tRNA 2-selenouridine synthase, found in Pseudomonas putida (strain ATCC 700007 / DSM 6899 / JCM 31910 / BCRC 17059 / LMG 24140 / F1).